A 313-amino-acid polypeptide reads, in one-letter code: Ribosomal RNA small subunit methyltransferase H (313 aa).

S-adenosyl-L-methionine-binding positions include 35–37 (GGH), D55, F80, D102, and Q109.

The protein belongs to the methyltransferase superfamily. RsmH family.

The protein localises to the cytoplasm. The enzyme catalyses cytidine(1402) in 16S rRNA + S-adenosyl-L-methionine = N(4)-methylcytidine(1402) in 16S rRNA + S-adenosyl-L-homocysteine + H(+). Its function is as follows. Specifically methylates the N4 position of cytidine in position 1402 (C1402) of 16S rRNA. In Shewanella baltica (strain OS223), this protein is Ribosomal RNA small subunit methyltransferase H.